We begin with the raw amino-acid sequence, 328 residues long: Probable voltage-gated potassium channel subunit beta (328 aa).

Tryptophan 21, glutamine 27, and aspartate 49 together coordinate NADP(+). Tyrosine 54 functions as the Proton donor/acceptor in the catalytic mechanism. NADP(+) is bound by residues serine 152, glutamine 178, tryptophan 207, serine 208, proline 209, leucine 210, alanine 211, lysine 218, arginine 229, glycine 285, threonine 287, glutamine 291, glutamate 294, and asparagine 295.

It belongs to the shaker potassium channel beta subunit family. Forms heteromultimeric complexes with potassium channel alpha subunits. As to expression, expressed in late-developed leaves with the highest expression in the flag leaf (at protein level).

Probable accessory potassium channel protein which modulates the activity of the pore-forming alpha subunit. This is Probable voltage-gated potassium channel subunit beta (KOB1) from Oryza sativa subsp. japonica (Rice).